Here is a 465-residue protein sequence, read N- to C-terminus: Chromosomal replication initiator protein DnaA (465 aa).

The interval 1 to 87 is domain I, interacts with DnaA modulators; it reads MLWTDCLTRL…RPGSILSSSE (87 aa). Residues 81 to 123 are disordered; it reads SILSSSEQPATTTAALQTAPIPQPAKVKREPEPVANTAVSSKS. Over residues 88 to 100 the composition is skewed to low complexity; it reads QPATTTAALQTAP. The interval 88 to 127 is domain II; sequence QPATTTAALQTAPIPQPAKVKREPEPVANTAVSSKSSKKK. The interval 128-345 is domain III, AAA+ region; that stretch reads LLNPQFTFSL…GALNKVVAIS (218 aa). Residues G173, G175, K176, and T177 each coordinate ATP. Residues 346–465 are domain IV, binds dsDNA; that stretch reads RFKGAPIDLD…YKNLLRLLQS (120 aa).

It belongs to the DnaA family. In terms of assembly, oligomerizes as a right-handed, spiral filament on DNA at oriC.

The protein localises to the cytoplasm. Plays an essential role in the initiation and regulation of chromosomal replication. ATP-DnaA binds to the origin of replication (oriC) to initiate formation of the DNA replication initiation complex once per cell cycle. Binds the DnaA box (a 9 base pair repeat at the origin) and separates the double-stranded (ds)DNA. Forms a right-handed helical filament on oriC DNA; dsDNA binds to the exterior of the filament while single-stranded (ss)DNA is stabiized in the filament's interior. The ATP-DnaA-oriC complex binds and stabilizes one strand of the AT-rich DNA unwinding element (DUE), permitting loading of DNA polymerase. After initiation quickly degrades to an ADP-DnaA complex that is not apt for DNA replication. Binds acidic phospholipids. This is Chromosomal replication initiator protein DnaA from Acinetobacter baumannii (strain AB307-0294).